The chain runs to 122 residues: Large ribosomal subunit protein uL14 (122 aa).

This sequence belongs to the universal ribosomal protein uL14 family. In terms of assembly, part of the 50S ribosomal subunit. Forms a cluster with proteins L3 and L19. In the 70S ribosome, L14 and L19 interact and together make contacts with the 16S rRNA in bridges B5 and B8.

Binds to 23S rRNA. Forms part of two intersubunit bridges in the 70S ribosome. In Pelagibacter ubique (strain HTCC1062), this protein is Large ribosomal subunit protein uL14.